Reading from the N-terminus, the 276-residue chain is Large ribosomal subunit protein uL2 (276 aa).

The disordered stretch occupies residues 213–264 (WLGRRPHNRGVVMNPVDHPHGGGEGRTSGGRHPVTPWGKPTKGYKTRTNKRT).

It belongs to the universal ribosomal protein uL2 family. Part of the 50S ribosomal subunit. Forms a bridge to the 30S subunit in the 70S ribosome.

In terms of biological role, one of the primary rRNA binding proteins. Required for association of the 30S and 50S subunits to form the 70S ribosome, for tRNA binding and peptide bond formation. It has been suggested to have peptidyltransferase activity; this is somewhat controversial. Makes several contacts with the 16S rRNA in the 70S ribosome. The protein is Large ribosomal subunit protein uL2 of Granulibacter bethesdensis (strain ATCC BAA-1260 / CGDNIH1).